Reading from the N-terminus, the 487-residue chain is MSFTLAIVGRPNVGKSTLFNRLVGKRLALVDDQPGVTRDLREGDARLIDLRFTVIDTAGLEEVTDDSLQGRMRRLTERAVEMADVCLFLIDGRVGVTPSDEVFADILRKKNAHVILGVNKAEGRAGDAGAIEAWSLGLGEPVRLSAEHGEGMDDLYHILRPIAEGFAERAAADAPVVDVDVSEEEADLEADPDAHKPTVKRPLQIAVIGRPNAGKSTLINKIIGEDRLLTGPEAGITRDAISVRSEWQGTPIRIFDTAGMRKKARISDKLEKLSVADGLRAVRFAEVVVVLLDVEIPFEQQDLRIADFAETEGRAVVVAVNKWDLEGEKQEKLAELKEMFDRLLPQLRGAPLVTVSAKTGRGLDRLHAAILKAHDIWNRRITTARLNSWLGAMVEAHPPPAPGGRRIKLRYMTQVKTRPPGFVVMCSHPDEMPDSYRRYLVNGLRDHFDMPGTPIRLTMRGQGDKNPFKERKFRTPSRLRKHLGKKG.

EngA-type G domains are found at residues 3–167 (FTLA…EGFA) and 203–378 (LQIA…DIWN). GTP-binding positions include 9–16 (GRPNVGKS), 56–60 (DTAGL), 119–122 (NKAE), 209–216 (GRPNAGKS), 256–260 (DTAGM), and 321–324 (NKWD). A KH-like domain is found at 379–463 (RRITTARLNS…PIRLTMRGQG (85 aa)). The tract at residues 459-487 (MRGQGDKNPFKERKFRTPSRLRKHLGKKG) is disordered. Basic residues predominate over residues 471–487 (RKFRTPSRLRKHLGKKG).

This sequence belongs to the TRAFAC class TrmE-Era-EngA-EngB-Septin-like GTPase superfamily. EngA (Der) GTPase family. As to quaternary structure, associates with the 50S ribosomal subunit.

Functionally, GTPase that plays an essential role in the late steps of ribosome biogenesis. This is GTPase Der from Cereibacter sphaeroides (strain ATCC 17025 / ATH 2.4.3) (Rhodobacter sphaeroides).